Here is a 430-residue protein sequence, read N- to C-terminus: Sphingosine-1-phosphate phosphatase 1 (430 aa).

Residues 34-103 (SSPAADEDAE…AGSQRRNSLT (70 aa)) are disordered. Residue Ser-101 is modified to Phosphoserine. A Phosphothreonine modification is found at Thr-103. 4 consecutive transmembrane segments (helical) span residues 121–141 (FCLGTELGNELFYILFFPFWI), 152–172 (LVIIWVLVMYLGQCTKDIIRW), 193–213 (MPSTHAMSGTAIPIAMFLLTY), and 216–236 (WQYPLIYGLILIPCWSSLVCL). The interval 167-175 (KDIIRWPRP) is phosphatase sequence motif I. A phosphatase sequence motif II region spans residues 194–197 (PSTH). The active-site Proton donor is the His-197. Residues 237-248 (SRIYMGMHSILD) form a phosphatase sequence motif III region. Catalysis depends on His-244, which acts as the Nucleophile. A run of 5 helical transmembrane segments spans residues 246–266 (ILDVIAGFLYTILILIIFYPL), 279–299 (YAPLIIIGLHLILGIFSFTLD), 311–331 (ILGSGAGIACGSHAAYTLGLS), 348–368 (VTLFGKAILRIVLGMLLVLFV), and 409–429 (YGMVGFSITFLVPYVFSFIGI).

This sequence belongs to the type 2 lipid phosphate phosphatase family. Highly expressed in liver and kidney. Expressed in epidermis, in the stratum granulosum and the stratum spinosum.

The protein localises to the endoplasmic reticulum membrane. It is found in the cell membrane. It carries out the reaction sphinganine 1-phosphate + H2O = sphinganine + phosphate. The enzyme catalyses sphing-4-enine 1-phosphate + H2O = sphing-4-enine + phosphate. Inhibited by NaF, sodium orthovanadate, propanolol, and N-ethylmaleimide. Specifically dephosphorylates sphingosine 1-phosphate (S1P), dihydro-S1P, and phyto-S1P. Does not act on ceramide 1-phosphate, lysophosphatidic acid or phosphatidic acid. Sphingosine-1-phosphate phosphatase activity is needed for efficient recycling of sphingosine into the sphingolipid synthesis pathway. Regulates the intracellular levels of the bioactive sphingolipid metabolite S1P that regulates diverse biological processes acting both as an extracellular receptor ligand or as an intracellular second messenger. Involved in efficient ceramide synthesis from exogenous sphingoid bases. Converts S1P to sphingosine, which is readily metabolized to ceramide via ceramide synthase. In concert with sphingosine kinase 2 (SphK2), recycles sphingosine into ceramide through a phosphorylation/dephosphorylation cycle. Regulates endoplasmic-to-Golgi trafficking of ceramides, resulting in the regulation of ceramide levels in the endoplasmic reticulum, preferentially long-chain ceramide species, and influences the anterograde membrane transport of both ceramide and proteins from the endoplasmic reticulum to the Golgi apparatus. The modulation of intracellular ceramide levels in turn regulates apoptosis. Via S1P levels, modulates resting tone, intracellular Ca(2+) and myogenic vasoconstriction in resistance arteries. Also involved in unfolded protein response (UPR) and ER stress-induced autophagy via regulation of intracellular S1P levels. Involved in the regulation of epidermal homeostasis and keratinocyte differentiation. This Mus musculus (Mouse) protein is Sphingosine-1-phosphate phosphatase 1.